Reading from the N-terminus, the 722-residue chain is MCDKKDVSPQKDQYTFLANCALGLEELIEAEIKGFSGVEVELGKGTVQWQGSLETGYRACLWSRFSSRILLKLSQFEVNSEDDLYQNSFTYDWHQHMSWKTTFAIDCTLSADATVGHSQFAALRIKDGIVDRFKEDGDERPSVKTTQPDVRFHIHVSGNEGTLYLDLSGESLHKRGYRVAGGMAPLKENLAAGIVALSGWPEKQEALPSLIDPMCGTGTLLIEAAMMFGDVAPGLARNYFGFLHWHQHDSQLWQALLDEAVAREDAGLDKTWPSFQGYDADPVVVSSARKNIIRAGLDEFIQVKCSPLVHLGAPTDRGMLICNPPYGERLSETEKVRQLYAAFGRIGRKHFAGWDVAVFISNPDLAESFRVSWEKKYRLFNGTIACRLSTGVFAEEEENSFAWEIQQVEVQEDALQFANRFKKNLKKYLKWAKKENISCFRVYDRDLQEFNLSVDLYEKWIHVQEYLPPKTIDPDLASRRFNIALRAIREILGLRSDRVFIKKRQRQKGAGQYQQQGDRKKMHQVREGNCYFLVNFRDYLDTGLFLDHRPIRLRIGRESLGKKFLNLYGYTGTASVHAAQGGAASTTTVDLSSTYLQWTEMNFSLNGFAENNHRTVKADCIKWLAEETELYDTIFVDPPTFSNTQKANRVFDIQRDHIQLLTLAMRRLSPGGLLIFSTNFRRFILDEKLAEQFDVKDITRESIPLDFSRNEKIHFCWEFRQK.

The region spanning 55 to 167 (TGYRACLWSR…GNEGTLYLDL (113 aa)) is the THUMP domain.

The protein belongs to the methyltransferase superfamily. RlmKL family.

Its subcellular location is the cytoplasm. It carries out the reaction guanosine(2445) in 23S rRNA + S-adenosyl-L-methionine = N(2)-methylguanosine(2445) in 23S rRNA + S-adenosyl-L-homocysteine + H(+). It catalyses the reaction guanosine(2069) in 23S rRNA + S-adenosyl-L-methionine = N(2)-methylguanosine(2069) in 23S rRNA + S-adenosyl-L-homocysteine + H(+). Specifically methylates the guanine in position 2445 (m2G2445) and the guanine in position 2069 (m7G2069) of 23S rRNA. This chain is Ribosomal RNA large subunit methyltransferase K/L, found in Desulfotalea psychrophila (strain LSv54 / DSM 12343).